Here is a 161-residue protein sequence, read N- to C-terminus: Small heat shock protein ibp (161 aa).

The region spanning 35 to 150 (EKPLSDTPAY…KPKKIFINIP (116 aa)) is the sHSP domain.

This sequence belongs to the small heat shock protein (HSP20) family.

This chain is Small heat shock protein ibp (ibp), found in Buchnera aphidicola subsp. Schizaphis graminum (strain Sg).